Here is a 206-residue protein sequence, read N- to C-terminus: Macrophage immunometabolism regulator (206 aa).

Belongs to the UNC119-binding protein family. As to quaternary structure, interacts with unc119 family proteins; interaction preferentially takes place when unc119 proteins are unliganded with myristoylated proteins.

It is found in the cytoplasm. The protein resides in the cell projection. Its subcellular location is the cilium. Its function is as follows. May play a role in immune regulation through regulation of the macrophage function. Involved in the recruitment of macrophages in response to injury. May also play a role in trafficking of proteins via its interaction with unc119 family cargo adapters. May play a role in ciliary membrane localization. In terms of biological role, regulates the macrophage function, by enhancing the resolution of inflammation and wound repair functions mediated by M2 macrophages. The regulation of macrophage function is, due at least in part, to the role of C5orf30 in regulating ability to inhibit glycolysis. Probably plays alaso a role in trafficking of proteins via its interaction with UNC119 and UNC119B cargo adapters: may help the release of UNC119 and UNC119B cargo or the recycling of UNC119 and UNC119B. May play a role in ciliary membrane localization via its interaction with UNC119B and protein transport into photoreceptor cells. The chain is Macrophage immunometabolism regulator (macir) from Danio rerio (Zebrafish).